Reading from the N-terminus, the 464-residue chain is uncharacterized protein (464 aa).

A TRAM domain is found at 13–71 (MLKVSDIIQIKIDKIVFGGEGLGYYNGFAVFVPMSIPEDELEIEIISIKKTYARGLIKN). S-adenosyl-L-methionine-binding residues include glutamine 295, tyrosine 324, glutamate 345, and aspartate 393. Cysteine 420 acts as the Nucleophile in catalysis.

The protein belongs to the class I-like SAM-binding methyltransferase superfamily. RNA M5U methyltransferase family.

This is an uncharacterized protein from Fusobacterium nucleatum subsp. nucleatum (strain ATCC 25586 / DSM 15643 / BCRC 10681 / CIP 101130 / JCM 8532 / KCTC 2640 / LMG 13131 / VPI 4355).